A 505-amino-acid polypeptide reads, in one-letter code: Cyanidin 3-O-glucoside 7-O-glucosyltransferase (acyl-glucose) (505 aa).

Positions 1-25 (MCPSFLVTLLLLQLSSLVVVLVVWA) are cleaved as a signal peptide. Residues Gln-52, His-152, and 197 to 198 (NE) contribute to the a beta-D-glucoside site. The Proton donor role is filled by Glu-198. An intrachain disulfide couples Cys-217 to Cys-225. N-linked (GlcNAc...) asparagine glycosylation is found at Asn-224, Asn-229, and Asn-324. 2 residues coordinate a beta-D-glucoside: Tyr-341 and Glu-403. Glu-403 (nucleophile) is an active-site residue. 2 N-linked (GlcNAc...) asparagine glycosylation sites follow: Asn-411 and Asn-437. Positions 447 and 463 each coordinate a beta-D-glucoside. The N-linked (GlcNAc...) asparagine glycan is linked to Asn-494.

Belongs to the glycosyl hydrolase 1 family.

The protein localises to the vacuole. The catalysed reaction is 1-O-(4-hydroxy-3-methoxybenzoyl)-beta-D-glucose + cyanidin 3-O-beta-D-glucoside = cyanidin 3,7-di-O-beta-D-glucoside + vanillate. It functions in the pathway pigment biosynthesis; anthocyanin biosynthesis. In terms of biological role, beta-glycosidase that catalyzes the transfer of glucose moiety to anthocyanidin 3-glucoside at the 7 position. Anthocyanins are ubiquitous colored pigments that are responsible for variations in petal color. This is Cyanidin 3-O-glucoside 7-O-glucosyltransferase (acyl-glucose) (AA7GT) from Delphinium grandiflorum (Siberian larkspur).